The following is a 733-amino-acid chain: Two pore calcium channel protein 1 (733 aa).

Methionine 1 is subject to N-acetylmethionine. The Cytoplasmic segment spans residues 1–71; sequence MEDPLIGRDS…RYYFIFTRLD (71 aa). A helical membrane pass occupies residues 72–92; the sequence is LIWSLNYFALLFLNFFEQPLW. The Vacuolar portion of the chain corresponds to 93 to 120; that stretch reads CEKNPKPSCKDRDYYYLGELPYLTNAES. Residues 121-141 form a helical membrane-spanning segment; it reads IIYEVITLAILLVHTFFPISY. Over 142–158 the chain is Cytoplasmic; the sequence is EGSRIFWTSRLNLVKVA. A helical transmembrane segment spans residues 159–179; the sequence is CVVILFVDVLVDFLYLSPLAF. Residue aspartate 180 is a topological domain, vacuolar. A helical; Voltage-sensor transmembrane segment spans residues 181-199; sequence FLPFRIAPYVRVIIFILSI. Residues 200–218 lie on the Cytoplasmic side of the membrane; that stretch reads RELRDTLVLLSGMLGTYLN. Residues 219-239 form a helical membrane-spanning segment; sequence ILALWMLFLLFASWIAFVMFE. At 240–245 the chain is on the vacuolar side; it reads DTQQGL. The segment at residues 246–260 is an intramembrane region (pore-forming); the sequence is TVFTSYGATLYQMFI. At 261–282 the chain is on the vacuolar side; sequence LFTTSNNPDVWIPAYKSSRWSS. The chain crosses the membrane as a helical span at residues 283–303; the sequence is VFFVLYVLIGVYFVTNLILAV. The Cytoplasmic portion of the chain corresponds to 304–428; the sequence is VYDSFKEQLA…LSQQLRAFVR (125 aa). 2 consecutive EF-hand domains span residues 322-357 and 363-398; these read MKRRMLEKAFGLIDSDKNGEIDKNQCIKLFEQLTNY and ISKEEFGLIFDELDDTRDFKINKDEFADLCQAIALR. A helical membrane pass occupies residues 429-449; it reads SPNFGYAISFILIINFIAVVV. Residues 450–465 lie on the Vacuolar side of the membrane; sequence ETTLDIEESSAQKPWQ. The helical transmembrane segment at 466–486 threads the bilayer; that stretch reads VAEFVFGWIYVLEMALKIYTY. Residues 487–498 are Cytoplasmic-facing; the sequence is GFENYWREGANR. The helical transmembrane segment at 499-519 threads the bilayer; it reads FDFLVTWVIVIGETATFITPD. The Vacuolar portion of the chain corresponds to 520–528; the sequence is ENTFFSNGE. Residues 529–546 traverse the membrane as a helical; Voltage-sensor segment; that stretch reads WIRYLLLARMLRLIRLLM. Topologically, residues 547 to 557 are cytoplasmic; it reads NVQRYRAFIAT. Residues 558 to 578 traverse the membrane as a helical segment; it reads FITLIPSLMPYLGTIFCVLCI. Over 579–615 the chain is Vacuolar; that stretch reads YCSIGVQVFGGLVNAGNKKLFETELAEDDYLLFNFND. Positions 616 to 630 form an intramembrane region, pore-forming; that stretch reads YPNGMVTLFNLLVMG. Residues 631–651 are Vacuolar-facing; it reads NWQVWMESYKDLTGTWWSITY. The chain crosses the membrane as a helical span at residues 652-672; it reads FVSFYVITILLLLNLVVAFVL. Residues 673-733 lie on the Cytoplasmic side of the membrane; sequence EAFFTELDLE…SKPECSTSDT (61 aa). Residues 686 to 695 are compositionally biased toward basic and acidic residues; it reads KCQGQDSQEK. The interval 686–711 is disordered; the sequence is KCQGQDSQEKRNRRRSAGSKSRSQRV.

The protein belongs to the calcium channel alpha-1 subunit (TC 1.A.1.11) family. Two pore calcium channel subfamily. Homodimer. Ubiquitously expressed.

It is found in the vacuole membrane. Inhibited by Al(3+). Functions as a voltage-gated inward-rectifying Ca(2+) channel (VDCC) across the vacuole membrane. Is one of the essential components of the slow vacuolar (SV) channel. Acts as the major ROS-responsive Ca(2+) channel and is the possible target of Al-dependent inhibition. Involved in the regulation of germination and stomatal movement. The sequence is that of Two pore calcium channel protein 1 (TPC1) from Arabidopsis thaliana (Mouse-ear cress).